Reading from the N-terminus, the 164-residue chain is Class I hydrophobin rodA (164 aa).

A signal peptide spans Met-1 to Ala-18. A glycan (N-linked (GlcNAc...) asparagine) is linked at Asn-50. 4 cysteine pairs are disulfide-bonded: Cys-60–Cys-138, Cys-68–Cys-132, Cys-69–Cys-109, and Cys-139–Cys-157.

It belongs to the fungal hydrophobin family. Self-assembles to form functional amyloid fibrils called rodlets. Self-assembly into fibrillar rodlets occurs spontaneously at hydrophobic:hydrophilic interfaces and the rodlets further associate laterally to form amphipathic monolayers.

Its subcellular location is the secreted. The protein resides in the cell wall. Functionally, aerial growth, conidiation, and dispersal of filamentous fungi in the environment rely upon a capability of their secreting small amphipathic proteins called hydrophobins (HPBs) with low sequence identity. Class I can self-assemble into an outermost layer of rodlet bundles on aerial cell surfaces, conferring cellular hydrophobicity that supports fungal growth, development and dispersal; whereas Class II form highly ordered films at water-air interfaces through intermolecular interactions but contribute nothing to the rodlet structure. RodA is a class I hydrophobin involved in the cell surface hydrophobicity and conidiation under aerial conditions. The surface rodlet layer of the conidial cell wall makes airborne conidia of filamentous fungi inert to both innate and adaptive immunity. The sequence is that of Class I hydrophobin rodA from Penicillium camembertii.